Here is a 155-residue protein sequence, read N- to C-terminus: Arginine repressor (155 aa).

The protein belongs to the ArgR family.

The protein resides in the cytoplasm. It functions in the pathway amino-acid biosynthesis; L-arginine biosynthesis [regulation]. In terms of biological role, regulates arginine biosynthesis genes. This chain is Arginine repressor, found in Mannheimia succiniciproducens (strain KCTC 0769BP / MBEL55E).